We begin with the raw amino-acid sequence, 899 residues long: RNA-binding motif protein 25 (899 aa).

The span at Met-1 to Ser-20 shows a compositional bias: polar residues. The interval Met-1–Gly-112 is disordered. The segment covering Ile-26–Gln-63 has biased composition (pro residues). The RRM domain occupies Thr-204–Ala-281. 2 disordered regions span residues Lys-298–Leu-572 and Gly-611–Gly-778. Basic and acidic residues-rich tracts occupy residues Glu-317 to Ile-340 and Glu-354 to Lys-372. Residues Pro-375–Ala-384 are compositionally biased toward pro residues. Residues Trp-430–Lys-505 show a composition bias toward basic and acidic residues. Residues Asn-434–Asp-578 are a coiled coil. Residues Tyr-515–Asp-524 show a composition bias toward acidic residues. A Nuclear localization signal 1 motif is present at residues Ser-526 to Ala-533. Residues Ala-533–Glu-568 show a composition bias toward basic and acidic residues. Polar residues predominate over residues Gly-626–Ser-640. Composition is skewed to basic and acidic residues over residues Pro-723 to Gln-733 and Asp-740 to Gly-778. Positions Ser-735–Ala-742 match the Nuclear localization signal 2 motif. The region spanning Glu-802 to Ala-899 is the PWI domain.

Specifically associates with functional splicing complexes. Associates with exon junction complex (EJC) proteins. Phosphorylated; the phosphorylation level is repressed by abscisic acid (ABA).

It localises to the nucleus. Functionally, RNA-binding protein that acts as a regulator of alternative pre-mRNA splicing. Negative regulator of responses to abscisic acid (ABA), including in early development. In Arabidopsis thaliana (Mouse-ear cress), this protein is RNA-binding motif protein 25.